A 1416-amino-acid polypeptide reads, in one-letter code: Non-structural polyprotein 1AB (1416 aa).

The stretch at 104-146 (KLIHKANALQERLRLSQEEKATLTLDVQFLQHENVRLKELISK) forms a coiled coil. The next 5 helical transmembrane spans lie at 154–174 (MKWI…GGYA), 239–259 (VFYY…LAIG), 286–306 (VLPT…TLMV), 313–333 (LLAI…LCFM), and 344–364 (GLIA…LTGT). Active-site charge relay system; for serine protease activity residues include H461, D489, and S551. Residues 587–614 (VKAPSQVELLKEEIERLKAQLNSAAENP) are a coiled coil. At Y693 the chain carries O-(5'-phospho-RNA)-tyrosine. A disordered region spans residues 752 to 815 (NFDQAKPTPA…DPQPYSQTYG (64 aa)). The segment covering 783-795 (SQKKDKQLEHEQQ) has biased composition (basic and acidic residues). Over residues 805–814 (NDPQPYSQTY) the composition is skewed to polar residues. The RdRp catalytic domain occupies 1161–1287 (KYFIEFDWTR…TTPSVPENYE (127 aa)).

Belongs to the astroviridae polyprotein 1AB family. As to quaternary structure, monomer. In terms of processing, cleaved by the viral and host proteases. The protease is probably autocatalytically cleaved.

It is found in the host membrane. The enzyme catalyses RNA(n) + a ribonucleoside 5'-triphosphate = RNA(n+1) + diphosphate. Responsible for the cleavage of the polyprotein into functional products. In terms of biological role, protein covalently attached to the 5' extremity of the genomic and subgenomic RNAs. It may serve as a primer for the replicase. This is Non-structural polyprotein 1AB (ORF1) from Homo sapiens (Human).